Reading from the N-terminus, the 860-residue chain is Ribosome-releasing factor 2, mitochondrial (860 aa).

Residues 45–337 (DRTRNIGIIA…AVVNFLPSPL (293 aa)) enclose the tr-type G domain. GTP is bound by residues 54–61 (AHIDAGKT), 118–122 (DTPGH), and 172–175 (NKMD).

It belongs to the TRAFAC class translation factor GTPase superfamily. Classic translation factor GTPase family. EF-G/EF-2 subfamily.

It is found in the mitochondrion. Its function is as follows. Mitochondrial GTPase that mediates the disassembly of ribosomes from messenger RNA at the termination of mitochondrial protein biosynthesis. Not involved in the GTP-dependent ribosomal translocation step during translation elongation. This Debaryomyces hansenii (strain ATCC 36239 / CBS 767 / BCRC 21394 / JCM 1990 / NBRC 0083 / IGC 2968) (Yeast) protein is Ribosome-releasing factor 2, mitochondrial.